We begin with the raw amino-acid sequence, 450 residues long: Glutamate--tRNA ligase 2 (450 aa).

Residues 10 to 20 carry the 'HIGH' region motif; that stretch reads PSPTGFLHIGG. Positions 232–236 match the 'KMSKS' region motif; the sequence is KLSKR. Lysine 235 is a binding site for ATP.

The protein belongs to the class-I aminoacyl-tRNA synthetase family. Glutamate--tRNA ligase type 1 subfamily. Monomer.

The protein resides in the cytoplasm. It carries out the reaction tRNA(Glu) + L-glutamate + ATP = L-glutamyl-tRNA(Glu) + AMP + diphosphate. Catalyzes the attachment of glutamate to tRNA(Glu) in a two-step reaction: glutamate is first activated by ATP to form Glu-AMP and then transferred to the acceptor end of tRNA(Glu). The polypeptide is Glutamate--tRNA ligase 2 (Wolbachia pipientis subsp. Culex pipiens (strain wPip)).